The following is a 273-amino-acid chain: Protein BMH2 (273 aa).

Serine 2 bears the N-acetylserine mark. The disordered stretch occupies residues 236–273 (DISESGQEDQQQQQQQQQQQQQQQQQAPAEQTQGEPTK). The segment covering 245 to 261 (QQQQQQQQQQQQQQQQQ) has biased composition (low complexity). A compositionally biased stretch (polar residues) spans 262–273 (APAEQTQGEPTK).

It belongs to the 14-3-3 family. As to quaternary structure, interacts with NTH1 (via N-terminus when phosphorylated by PKA); the interaction is direct and activates NTH1. Interacts with FIN1.

It is found in the cytoplasm. The protein resides in the nucleus. The sequence is that of Protein BMH2 (BMH2) from Saccharomyces cerevisiae (strain ATCC 204508 / S288c) (Baker's yeast).